The sequence spans 332 residues: Fructose-1,6-bisphosphatase class 1 (332 aa).

Glutamate 89, aspartate 110, leucine 112, and aspartate 113 together coordinate Mg(2+). Substrate contacts are provided by residues 113-116 (DGSS), asparagine 206, tyrosine 239, 257-259 (YLY), and lysine 269. Position 275 (glutamate 275) interacts with Mg(2+).

This sequence belongs to the FBPase class 1 family. Homotetramer. Requires Mg(2+) as cofactor.

It localises to the cytoplasm. The catalysed reaction is beta-D-fructose 1,6-bisphosphate + H2O = beta-D-fructose 6-phosphate + phosphate. Its pathway is carbohydrate biosynthesis; gluconeogenesis. In Salmonella gallinarum (strain 287/91 / NCTC 13346), this protein is Fructose-1,6-bisphosphatase class 1.